A 555-amino-acid polypeptide reads, in one-letter code: uncharacterized protein (555 aa).

The next 5 membrane-spanning stretches (helical) occupy residues 13-30 (ALQAVVVLSLISAIGLGL), 35-57 (FWGVSLGVTFVFFAGILAGHFGL), 72-91 (LVIFVYSLGLQVGPGFFSSF), 98-120 (LNMLALAVVLLGTLLTVVASYAT), and 157-179 (TPALGCAVAYPMGVIGVILAVLL). 2 consecutive RCK C-terminal domains span residues 188 to 273 (EDLE…LFGE) and 282 to 366 (KEDI…VLGN). 6 helical membrane passes run 376–398 (LVVIFIGIVLGLALGAIPFSIPG), 408–430 (AGGPIIVGILLGTFGPRIHMITY), 437–459 (LMLRALGLSMYLACLGLDAGAHF), 469–491 (LLWIALGAGLTIIPTVLVGFVAF), 498–517 (FGSVSGMLCGSMANPMALNY), and 532–554 (ATVYPLCMFLRVIIAQVLLMFLL).

It belongs to the AAE transporter (TC 2.A.81) family.

Its subcellular location is the cell membrane. This is an uncharacterized protein from Bacteroides thetaiotaomicron (strain ATCC 29148 / DSM 2079 / JCM 5827 / CCUG 10774 / NCTC 10582 / VPI-5482 / E50).